We begin with the raw amino-acid sequence, 511 residues long: Histidine ammonia-lyase (511 aa).

A cross-link (5-imidazolinone (Ala-Gly)) is located at residues A142–G144. S143 is subject to 2,3-didehydroalanine (Ser).

This sequence belongs to the PAL/histidase family. Post-translationally, contains an active site 4-methylidene-imidazol-5-one (MIO), which is formed autocatalytically by cyclization and dehydration of residues Ala-Ser-Gly.

The protein localises to the cytoplasm. The catalysed reaction is L-histidine = trans-urocanate + NH4(+). It participates in amino-acid degradation; L-histidine degradation into L-glutamate; N-formimidoyl-L-glutamate from L-histidine: step 1/3. The polypeptide is Histidine ammonia-lyase (Brucella canis (strain ATCC 23365 / NCTC 10854 / RM-666)).